Here is a 140-residue protein sequence, read N- to C-terminus: FlaA locus uncharacterized protein YlxG (140 aa).

The disordered stretch occupies residues 1–21 (MTSISSEYKLPEKTNTVSTNN).

Belongs to the FlgD family.

This Bacillus subtilis (strain 168) protein is FlaA locus uncharacterized protein YlxG (ylxG).